We begin with the raw amino-acid sequence, 479 residues long: Bifunctional protein HldE (479 aa).

The interval 1-322 (MIDDFRFGRI…RELLQEMPET (322 aa)) is ribokinase. 198–201 (NRIE) contributes to the ATP binding site. Asp-267 is an active-site residue. The cytidylyltransferase stretch occupies residues 347–479 (FTNGCFDLVH…LVRGMQSAPS (133 aa)).

The protein in the N-terminal section; belongs to the carbohydrate kinase PfkB family. In the C-terminal section; belongs to the cytidylyltransferase family. As to quaternary structure, homodimer.

The enzyme catalyses D-glycero-beta-D-manno-heptose 7-phosphate + ATP = D-glycero-beta-D-manno-heptose 1,7-bisphosphate + ADP + H(+). It catalyses the reaction D-glycero-beta-D-manno-heptose 1-phosphate + ATP + H(+) = ADP-D-glycero-beta-D-manno-heptose + diphosphate. The protein operates within nucleotide-sugar biosynthesis; ADP-L-glycero-beta-D-manno-heptose biosynthesis; ADP-L-glycero-beta-D-manno-heptose from D-glycero-beta-D-manno-heptose 7-phosphate: step 1/4. It functions in the pathway nucleotide-sugar biosynthesis; ADP-L-glycero-beta-D-manno-heptose biosynthesis; ADP-L-glycero-beta-D-manno-heptose from D-glycero-beta-D-manno-heptose 7-phosphate: step 3/4. Its function is as follows. Catalyzes the phosphorylation of D-glycero-D-manno-heptose 7-phosphate at the C-1 position to selectively form D-glycero-beta-D-manno-heptose-1,7-bisphosphate. In terms of biological role, catalyzes the ADP transfer from ATP to D-glycero-beta-D-manno-heptose 1-phosphate, yielding ADP-D-glycero-beta-D-manno-heptose. This is Bifunctional protein HldE from Gluconobacter oxydans (strain 621H) (Gluconobacter suboxydans).